Consider the following 386-residue polypeptide: Innexin inx4 (386 aa).

Residues 1-21 are Cytoplasmic-facing; the sequence is MLEFVRPLQSILQIKQVNSTD. Residues 22–42 form a helical membrane-spanning segment; sequence LVWRLHCRVTVFLLLLASLLL. The Extracellular segment spans residues 43–111; that stretch reads SARQYFGNPI…ESERSYQKYY (69 aa). The helical transmembrane segment at 112 to 132 threads the bilayer; that stretch reads QWVVFILALQACMFSVPNFLW. At 133–187 the chain is on the cytoplasmic side; that stretch reads KAWEAGRLQSLCDGLTTPIVPDHWEKTRKKQLITYLSADFPRLHRTYLLRYCFCT. A helical transmembrane segment spans residues 188-208; that stretch reads LLNFCNVLLNIFLVNVIFSGF. At 209–272 the chain is on the extracellular side; that stretch reads WSNYHPAVKA…LNVVNEKIFA (64 aa). The helical transmembrane segment at 273–293 threads the bilayer; it reads FIWLWFLGLLVISMLNLLFWI. At 294–386 the chain is on the cytoplasmic side; that stretch reads VVLCSKGFRL…DPEGYDEEGV (93 aa). The interval 358-386 is disordered; sequence HNGHKTFRMPKGGEPDFYTDPEGYDEEGV. Acidic residues predominate over residues 374 to 386; the sequence is FYTDPEGYDEEGV.

The protein belongs to the pannexin family.

It is found in the cell membrane. The protein resides in the cell junction. Its subcellular location is the gap junction. In terms of biological role, structural component of gap junctions. Required for normal development of ovary. Required for normal egg production after blood meal. Required for normal development of testis. (Microbial infection) Modulates the development of Plasmodium falciparum oocysts. In Anopheles gambiae (African malaria mosquito), this protein is Innexin inx4.